Here is a 359-residue protein sequence, read N- to C-terminus: Fc receptor-like A (359 aa).

Positions 1–27 are cleaved as a signal peptide; that stretch reads MKLGCVLMAWALYLSLGVLWVAQMLLA. 2 Ig-like C2-type domains span residues 70–159 and 170–257; these read PFHL…ETAS and PAPI…PQLE. Disulfide bonds link Cys99-Cys143 and Cys192-Cys240. Residues 259 to 313 form a disordered region; that stretch reads RVQGASSSAAPPTLNPAPQKSAAPGTAPEEAPGPLPPPPTPSSEDPGFSSPLGMP. Over residues 279 to 288 the composition is skewed to low complexity; the sequence is SAAPGTAPEE. Residues 289–299 show a composition bias toward pro residues; sequence APGPLPPPPTP.

Monomer or homodimer; disulfide-linked. In terms of tissue distribution, expressed specifically in primary and secondary lymphoid tissues like lymph node, spleen and tonsil. Specifically expressed in B-cells with a high level in normal germinal center B-cells, centroblasts and in a subset of diffuse large B-cell lymphomas. Highly expressed in bone marrow B-cells and weakly in earlier B lineage cells. Expressed in pre-germinal and germinal center B-cells in secondary lymphoid tissues. Also expressed in melanoma and melanocytes.

It localises to the cytoplasm. In terms of biological role, may be implicated in B-cell differentiation and lymphomagenesis. The polypeptide is Fc receptor-like A (FCRLA) (Homo sapiens (Human)).